Reading from the N-terminus, the 224-residue chain is Peptidyl-prolyl cis-trans isomerase CYP21-1 (224 aa).

A signal peptide spans Met-1 to Ala-27. A PPIase cyclophilin-type domain is found at Phe-50 to Glu-214. Asn-158 carries an N-linked (GlcNAc...) asparagine glycan.

It belongs to the cyclophilin-type PPIase family. In terms of tissue distribution, ubiquitous.

It localises to the endoplasmic reticulum. The enzyme catalyses [protein]-peptidylproline (omega=180) = [protein]-peptidylproline (omega=0). Its function is as follows. PPIases accelerate the folding of proteins. It catalyzes the cis-trans isomerization of proline imidic peptide bonds in oligopeptides. The protein is Peptidyl-prolyl cis-trans isomerase CYP21-1 (CYP21-1) of Arabidopsis thaliana (Mouse-ear cress).